A 546-amino-acid polypeptide reads, in one-letter code: CTP synthase (546 aa).

Positions 1 to 266 are amidoligase domain; it reads MARYIFITGG…DTEVLDVFGL (266 aa). A CTP-binding site is contributed by serine 13. Serine 13 contacts UTP. 14–19 contributes to the ATP binding site; that stretch reads SLGKGL. Tyrosine 54 contributes to the L-glutamine binding site. Aspartate 71 contributes to the ATP binding site. Residues aspartate 71 and glutamate 140 each contribute to the Mg(2+) site. CTP is bound by residues 147–149, 187–192, and lysine 223; these read DIE and KTKPTQ. UTP contacts are provided by residues 187–192 and lysine 223; that span reads KTKPTQ. Positions 293 to 545 constitute a Glutamine amidotransferase type-1 domain; the sequence is NIAIVGKYTG…IGAAKERSRL (253 aa). Alanine 357 serves as a coordination point for L-glutamine. Cysteine 384 serves as the catalytic Nucleophile; for glutamine hydrolysis. Residues 385 to 388, glutamate 408, and arginine 473 each bind L-glutamine; that span reads FGMQ. Residues histidine 518 and glutamate 520 contribute to the active site.

This sequence belongs to the CTP synthase family. In terms of assembly, homotetramer.

The enzyme catalyses UTP + L-glutamine + ATP + H2O = CTP + L-glutamate + ADP + phosphate + 2 H(+). The catalysed reaction is L-glutamine + H2O = L-glutamate + NH4(+). It carries out the reaction UTP + NH4(+) + ATP = CTP + ADP + phosphate + 2 H(+). The protein operates within pyrimidine metabolism; CTP biosynthesis via de novo pathway; CTP from UDP: step 2/2. Allosterically activated by GTP, when glutamine is the substrate; GTP has no effect on the reaction when ammonia is the substrate. The allosteric effector GTP functions by stabilizing the protein conformation that binds the tetrahedral intermediate(s) formed during glutamine hydrolysis. Inhibited by the product CTP, via allosteric rather than competitive inhibition. In terms of biological role, catalyzes the ATP-dependent amination of UTP to CTP with either L-glutamine or ammonia as the source of nitrogen. Regulates intracellular CTP levels through interactions with the four ribonucleotide triphosphates. This is CTP synthase from Phenylobacterium zucineum (strain HLK1).